Reading from the N-terminus, the 229-residue chain is Lantibiotic transport ATP-binding protein SrtF (229 aa).

The 224-residue stretch at 2–225 folds into the ABC transporter domain; that stretch reads LKIQNLKKSY…EELFNNQILF (224 aa). 34–41 provides a ligand contact to ATP; sequence GPNGAGKS.

This sequence belongs to the ABC transporter superfamily.

Its function is as follows. Implicated in the export process of the lantibiotic SrtA. In Streptococcus pyogenes serotype M1, this protein is Lantibiotic transport ATP-binding protein SrtF (srtF).